An 861-amino-acid chain; its full sequence is Interleukin-12 receptor subunit beta-2 (861 aa).

An N-terminal signal peptide occupies residues 1–23; the sequence is MARTVCGCSWALIFIIMSLLVKA. The Extracellular segment spans residues 24–622; that stretch reads KIDVCKRGDV…REFCLQGKAN (599 aa). 4 N-linked (GlcNAc...) asparagine glycosylation sites follow: Asn48, Asn129, Asn166, and Asn271. Fibronectin type-III domains are found at residues 126–224, 226–317, 318–415, 423–520, and 521–620; these read QPQN…VVRP, PPWD…TQTP, EKEP…NIAD, APQQ…KHKA, and PLSG…LQGK. A WSXWS motif motif is present at residues 305-309; the sequence is WSDWS. Asn347, Asn376, and Asn480 each carry an N-linked (GlcNAc...) asparagine glycan. A helical transmembrane segment spans residues 623–643; the sequence is WSTFVAPSICIAVITVGVFSM. Residues 644–861 are Cytoplasmic-facing; that stretch reads RCFRQKVFVL…LKMGCGSLML (218 aa). The Box 1 motif motif lies at 662-670; sequence CSREIPDPA. The interval 718–761 is disordered; sequence FRRPHHPNWPGKGQRLQGRHASEEDTGSSASSPPPPRALTAETG. Phosphotyrosine is present on Tyr800.

It belongs to the type I cytokine receptor family. Type 2 subfamily. Heterodimer/heterooligomer; disulfide-linked. The functional high affinity IL12 receptor is composed of I12RB1 and IL12RB2. Il12RB2 binds JAK2 (via its N-terminal) through a membrane-proximal region of the cytoplasmic domain. In terms of processing, on IL12 stimulation, phosphorylated on C-terminal tyrosine residues.

Its subcellular location is the membrane. Functionally, receptor for interleukin-12. This subunit is the signaling component coupling to the JAK2/STAT4 pathway. The sequence is that of Interleukin-12 receptor subunit beta-2 (IL12RB2) from Sus scrofa (Pig).